We begin with the raw amino-acid sequence, 168 residues long: Large ribosomal subunit protein uL10 (168 aa).

The protein belongs to the universal ribosomal protein uL10 family. Part of the ribosomal stalk of the 50S ribosomal subunit. The N-terminus interacts with L11 and the large rRNA to form the base of the stalk. The C-terminus forms an elongated spine to which L12 dimers bind in a sequential fashion forming a multimeric L10(L12)X complex.

In terms of biological role, forms part of the ribosomal stalk, playing a central role in the interaction of the ribosome with GTP-bound translation factors. This is Large ribosomal subunit protein uL10 from Lacticaseibacillus casei (strain BL23) (Lactobacillus casei).